The primary structure comprises 156 residues: ATP synthase subunit b (156 aa).

Residues 5–27 (ITLIGQMITFAIFVGFTMKFVWP) form a helical membrane-spanning segment.

The protein belongs to the ATPase B chain family. F-type ATPases have 2 components, F(1) - the catalytic core - and F(0) - the membrane proton channel. F(1) has five subunits: alpha(3), beta(3), gamma(1), delta(1), epsilon(1). F(0) has three main subunits: a(1), b(2) and c(10-14). The alpha and beta chains form an alternating ring which encloses part of the gamma chain. F(1) is attached to F(0) by a central stalk formed by the gamma and epsilon chains, while a peripheral stalk is formed by the delta and b chains.

It is found in the cell inner membrane. Functionally, f(1)F(0) ATP synthase produces ATP from ADP in the presence of a proton or sodium gradient. F-type ATPases consist of two structural domains, F(1) containing the extramembraneous catalytic core and F(0) containing the membrane proton channel, linked together by a central stalk and a peripheral stalk. During catalysis, ATP synthesis in the catalytic domain of F(1) is coupled via a rotary mechanism of the central stalk subunits to proton translocation. Its function is as follows. Component of the F(0) channel, it forms part of the peripheral stalk, linking F(1) to F(0). The protein is ATP synthase subunit b of Francisella tularensis subsp. tularensis (strain SCHU S4 / Schu 4).